The sequence spans 263 residues: PDZ domain-containing protein 9 (263 aa).

In terms of domain architecture, PDZ spans 30–109 (QTKLTVGSMG…GTILQIKVYR (80 aa)).

In Bos taurus (Bovine), this protein is PDZ domain-containing protein 9 (PDZD9).